We begin with the raw amino-acid sequence, 263 residues long: Oxidoreductase tpcG (263 aa).

Belongs to the avfA family. In terms of tissue distribution, specifically expressed in conidia.

Its pathway is secondary metabolite biosynthesis. Its function is as follows. Oxidoreductase; part of the gene cluster that mediates the biosynthesis of trypacidin, a mycotoxin with antiprotozoal activity and that plays a role in the infection process. The pathway begins with the synthesis of atrochrysone thioester by the polyketide synthase (PKS) tpcC. The atrochrysone carboxyl ACP thioesterase tpcB then breaks the thioester bond and releases the atrochrysone carboxylic acid from tpcC. The decarboxylase tpcK converts atrochrysone carboxylic acid to atrochrysone which is further reduced into emodin anthrone. The next step is performed by the emodin anthrone oxygenase tpcL that catalyzes the oxidation of emodinanthrone to emodin. Emodin O-methyltransferase encoded by tpcA catalyzes methylation of the 8-hydroxy group of emodin to form questin. Ring cleavage of questin by questin oxidase tpcI leads to desmethylsulochrin via several intermediates including questin epoxide. Another methylation step catalyzed by tpcM leads to the formation of sulochrin which is further converted to monomethylsulfochrin by tpcH. Finally, the tpcJ catalyzes the conversion of monomethylsulfochrin to trypacidin. Trypacidin is toxic for human pulmonary and bronchial epithelial cells by initiating the intracellular formation of nitric oxide (NO) and hydrogen peroxide (H(2)O(2)), thus triggering host necrotic cell death. The trypacidin pathway is also able to produce endocrocin via a distinct route from the endocrocin Enc pathway. This Aspergillus fumigatus (strain ATCC MYA-4609 / CBS 101355 / FGSC A1100 / Af293) (Neosartorya fumigata) protein is Oxidoreductase tpcG.